The sequence spans 236 residues: Transcriptional regulatory protein RprY (236 aa).

The 115-residue stretch at 9-123 (RILLCEDDEN…ELTFRIEAIL (115 aa)) folds into the Response regulatory domain. Aspartate 58 is modified (4-aspartylphosphate). Positions 134 to 231 (SNVYKIGKFT…IHGKGYKLIT (98 aa)) form a DNA-binding region, ompR/PhoB-type.

Phosphorylated by RprX.

Its subcellular location is the cytoplasm. Its function is as follows. Member of the two-component regulatory system RprX/RprY. The polypeptide is Transcriptional regulatory protein RprY (rprY) (Bacteroides fragilis (strain YCH46)).